The sequence spans 396 residues: Tyrosine--tRNA ligase (396 aa).

The 'HIGH' region signature appears at 42–51 (PTAPDIHLGH). A 'KMSKS' region motif is present at residues 226–230 (KMSKS). An ATP-binding site is contributed by Lys229. One can recognise an S4 RNA-binding domain in the interval 334–395 (LPIANLLKEA…GKRKFAKIII (62 aa)).

The protein belongs to the class-I aminoacyl-tRNA synthetase family. TyrS type 2 subfamily. As to quaternary structure, homodimer.

Its subcellular location is the cytoplasm. The catalysed reaction is tRNA(Tyr) + L-tyrosine + ATP = L-tyrosyl-tRNA(Tyr) + AMP + diphosphate + H(+). Its function is as follows. Catalyzes the attachment of tyrosine to tRNA(Tyr) in a two-step reaction: tyrosine is first activated by ATP to form Tyr-AMP and then transferred to the acceptor end of tRNA(Tyr). The polypeptide is Tyrosine--tRNA ligase (Francisella tularensis subsp. tularensis (strain SCHU S4 / Schu 4)).